Consider the following 248-residue polypeptide: MGMDAWDGKQAAPPRRARRWLRWLMAAPLLFAAASVLQVLILRVVDPPISSMMVGRYLEAWGEGDWRFSLHQQWRDYDKIAASLPILVVAAEDQQFPMHHGFDLQAIEKARDHNARGGRVRGASTISQQVAKNVFLWQGRSWVRKGLEAWYTVLIELFWPKQRILEMYLNVAEFGDGVYGAQAAAQQFWSKDAAGLSPSESARLAAVLPSPRRYDARRPGAFVQRRATWIQRQARQLGGPVYLQGPSR.

The chain crosses the membrane as a helical span at residues 20–42 (WLRWLMAAPLLFAAASVLQVLIL).

This sequence belongs to the glycosyltransferase 51 family.

Its subcellular location is the cell inner membrane. It carries out the reaction [GlcNAc-(1-&gt;4)-Mur2Ac(oyl-L-Ala-gamma-D-Glu-L-Lys-D-Ala-D-Ala)](n)-di-trans,octa-cis-undecaprenyl diphosphate + beta-D-GlcNAc-(1-&gt;4)-Mur2Ac(oyl-L-Ala-gamma-D-Glu-L-Lys-D-Ala-D-Ala)-di-trans,octa-cis-undecaprenyl diphosphate = [GlcNAc-(1-&gt;4)-Mur2Ac(oyl-L-Ala-gamma-D-Glu-L-Lys-D-Ala-D-Ala)](n+1)-di-trans,octa-cis-undecaprenyl diphosphate + di-trans,octa-cis-undecaprenyl diphosphate + H(+). It participates in cell wall biogenesis; peptidoglycan biosynthesis. Functionally, peptidoglycan polymerase that catalyzes glycan chain elongation from lipid-linked precursors. This Xanthomonas euvesicatoria pv. vesicatoria (strain 85-10) (Xanthomonas campestris pv. vesicatoria) protein is Biosynthetic peptidoglycan transglycosylase.